The sequence spans 485 residues: Phosphoglucosamine mutase (485 aa).

The active-site Phosphoserine intermediate is serine 133. Residues serine 133, aspartate 274, aspartate 276, and aspartate 278 each contribute to the Mg(2+) site. Serine 133 carries the phosphoserine modification.

The protein belongs to the phosphohexose mutase family. The cofactor is Mg(2+). Activated by phosphorylation.

The enzyme catalyses alpha-D-glucosamine 1-phosphate = D-glucosamine 6-phosphate. Functionally, catalyzes the conversion of glucosamine-6-phosphate to glucosamine-1-phosphate. The polypeptide is Phosphoglucosamine mutase (Rippkaea orientalis (strain PCC 8801 / RF-1) (Cyanothece sp. (strain PCC 8801))).